The following is an 893-amino-acid chain: Dystroglycan 1 (893 aa).

Positions 1 to 27 (MSVDNWLLHPLWGQTFLLLLSVAVAQA) are cleaved as a signal peptide. Residues 28-406 (HWPSEPSEAV…GQIRPTLTIP (379 aa)) form a required for laminin recognition region. The O-glycosylated at one site stretch occupies residues 47-69 (SMHSVLSDFQEAVPTVVGIPDGT). N139 carries an N-linked (GlcNAc...) asparagine glycan. Cysteines 180 and 262 form a disulfide. Positions 314-483 (ATPTPVTAIG…PPTRIRTTTS (170 aa)) are mucin-like domain. 3 O-linked (Man6P...) threonine glycosylation sites follow: T315, T317, and T377. The segment at 379 to 498 (TLGPIQPTRV…GEPNQRPELK (120 aa)) is disordered. Residues 409-445 (VEPTAVITPPTTTTKKPRVSTPKPATPSTDSSTTTTR) are compositionally biased toward low complexity. The interval 461–483 (TTKAPITRLETASPPTRIRTTTS) is O-glycosylated at seven sites with GalNAc. Positions 601-710 (KAPARFKARL…LSIAVTGSGS (110 aa)) constitute a Peptidase S72 domain. N-linked (GlcNAc...) asparagine glycosylation is found at N639, N647, and N659. Residues 652-751 (SIVVEWTNNT…SSEDDVYLHT (100 aa)) are Extracellular-facing. Residues C667 and C711 are joined by a disulfide bond. The tract at residues 722 to 744 (PSPGSSAAPATEVPDRDPEKSSE) is disordered. The segment covering 734 to 744 (VPDRDPEKSSE) has biased composition (basic and acidic residues). The helical transmembrane segment at 752 to 772 (VIPAVVVAAILLIAGIIAMIC) threads the bilayer. The Cytoplasmic portion of the chain corresponds to 773-893 (YRKKRKGKLT…YRSPPPYVPP (121 aa)). The Nuclear localization signal motif lies at 774–780 (RKKRKGK). Position 788 is a phosphothreonine (T788). Residues 817–893 (LQEEKAPLPP…YRSPPPYVPP (77 aa)) are required for interaction with CAV3. The tract at residues 821 to 893 (KAPLPPPEYP…YRSPPPYVPP (73 aa)) is disordered. Residues 830–844 (PNQSMPETTPLNQDT) are compositionally biased toward polar residues. Residues 857–868 (NAPPYQPPPPFT) are compositionally biased toward pro residues. The required for binding DMD and UTRN stretch occupies residues 878 to 893 (PKNMTPYRSPPPYVPP). A PPXY motif motif is present at residues 887–890 (PPPY). A Phosphotyrosine; by SRC modification is found at Y890.

As to quaternary structure, monomer. Heterodimer of alpha- and beta-dystroglycan subunits which are the central components of the dystrophin-glycoprotein complex. This complex then can form a dystrophin-associated glycoprotein complex (DGC) which is composed of three subcomplexes: a cytoplasmic complex comprised of DMD (or UTRN), DTNA and a number of syntrophins, such as SNTB1, SNTB2, SNTG1 and SNTG2, the transmembrane dystroglycan complex, and the sarcoglycan-sarcospan complex. Interacts (via the N-terminal of alphaDAG1) with LARGE1; the interaction enhances laminin binding. Interacts with SGCD. Interacts with AGR2 and AGR3. Interacts (betaDAG1) with DMD; the interaction is inhibited by phosphorylation on the PPXY motif. Interacts (betaDAG1, via its PPXY motif) with UTRN (via its WWW and ZZ domains); the interaction is inhibited by phosphorylation on the PPXY motif. Interacts (betaDAG1, via its phosphorylated PPXY motif) with the SH2 domain-containing proteins, FYN, CSK, NCK and SHC. Interacts (betaDAG1) with CAV3 (via a central WW-like domain); the interaction disrupts the binding of DMD. BetaDAG1 directly interacts with ANK3, but not with ANK2; this interaction does not interfere with DMD-binding and is required for retention at costameres. Identified in a dystroglycan complex that contains at least PRX, DRP2, UTRN, DMD and DAG1. Interacts with POMGNT1. BetaDAG1 interacts with CD93. O-glycosylated. POMGNT1 catalyzes the initial addition of N-acetylglucosamine, giving rise to the GlcNAc(beta1-2)Man(alpha1-)O-Ser/Thr moiety and thus providing the necessary basis for the addition of further carbohydrate moieties. Heavily O-glycosylated comprising of up to two thirds of its mass and the carbohydrate composition differs depending on tissue type. Mucin-type O-glycosylation is important for ligand binding activity. O-mannosylation is found in high abundance in both brain and muscle where the most abundant glycan is Sia-alpha-2-3-Gal-beta-1-4-Glc-NAc-beta-1-2-Man. In muscle, glycosylation on Thr-315, Thr-317, Thr-379 by a phosphorylated O-mannosyl glycan with the structure 2-(N-acetylamido)-2-deoxygalactosyl-beta-1,3-2-(N-acetylamido)-2-deoxyglucosyl-beta-1,4-6-phosphomannose is mediated by like-acetylglucosaminyltransferase (LARGE1) protein amd is required for laminin binding. O-glycosylated in the N-terminal region with a core 1 or possibly core 8 glycan. The brain form displays a unique glycosylation pattern which is absent in other tissues; this form shows enhanced binding to laminin LAMA5 compared to the skeletal muscle form. In terms of processing, N-glycosylated. Post-translationally, autolytic cleavage produces the alpha and beta subunits. In cutaneous cells, as well as in certain pathological conditions, shedding of beta-dystroglycan can occur releasing a peptide of about 30 kDa. SRC-mediated phosphorylation of the PPXY motif of the beta subunit recruits SH2 domain-containing proteins, but inhibits binding to WWW domain-containing proteins, DMD and UTRN. This phosphorylation also inhibits nuclear entry. In terms of tissue distribution, detected in brain and kidney (at protein level). Detected in sciatic nerve (at protein level). Expressed in neurons and muscle cells (at protein level). Expressed in a variety of tissues. In brain, expressed in the hippocampal formation, the olfactory bulb, the cerebellum and the thalamus. In the peripheral nerve system, expressed in Schwann cells.

It is found in the secreted. The protein localises to the extracellular space. The protein resides in the cell membrane. Its subcellular location is the cytoplasm. It localises to the cytoskeleton. It is found in the nucleus. The protein localises to the nucleoplasm. The protein resides in the sarcolemma. Its subcellular location is the postsynaptic cell membrane. Functionally, the dystroglycan complex is involved in a number of processes including laminin and basement membrane assembly, sarcolemmal stability, cell survival, peripheral nerve myelination, nodal structure, cell migration, and epithelial polarization. Its function is as follows. Extracellular peripheral glycoprotein that acts as a receptor for extracellular matrix proteins containing laminin-G domains, and for certain adenoviruses. Receptor for laminin-2 (LAMA2) and agrin in peripheral nerve Schwann cells. Also acts as a receptor for laminin LAMA5. Transmembrane protein that plays important roles in connecting the extracellular matrix to the cytoskeleton. Acts as a cell adhesion receptor in both muscle and non-muscle tissues. Receptor for both DMD and UTRN and, through these interactions, scaffolds axin to the cytoskeleton. Also functions in cell adhesion-mediated signaling and implicated in cell polarity. The sequence is that of Dystroglycan 1 from Mus musculus (Mouse).